The following is a 79-amino-acid chain: Short neurotoxin 1/5 (79 aa).

The N-terminal stretch at 1 to 21 is a signal peptide; it reads MKTLLLTLVMVTIMCLDLGYT. 4 disulfide bridges follow: Cys24–Cys41, Cys34–Cys59, Cys63–Cys71, and Cys72–Cys77.

The protein belongs to the three-finger toxin family. Short-chain subfamily. Type III alpha-neurotoxin sub-subfamily. As to expression, expressed by the venom gland.

Its subcellular location is the secreted. Binds with high affinity to muscle nicotinic acetylcholine receptor (nAChR) and inhibit acetylcholine from binding to the receptor, thereby impairing neuromuscular transmission. Compete with the binding of alpha-bungarotoxin on muscle AChR (from Torpedo) with an IC(50) of 0.31 uM (SNTX1) and 3.1 uM (SNTX5). Is able of exerting muscle paralysis, spasms and increased respiration. This chain is Short neurotoxin 1/5, found in Pseudonaja textilis (Eastern brown snake).